Reading from the N-terminus, the 357-residue chain is Tetraacyldisaccharide 4'-kinase (357 aa).

Residue 67–74 participates in ATP binding; it reads SVGGTGKT.

The protein belongs to the LpxK family.

The enzyme catalyses a lipid A disaccharide + ATP = a lipid IVA + ADP + H(+). It participates in glycolipid biosynthesis; lipid IV(A) biosynthesis; lipid IV(A) from (3R)-3-hydroxytetradecanoyl-[acyl-carrier-protein] and UDP-N-acetyl-alpha-D-glucosamine: step 6/6. Functionally, transfers the gamma-phosphate of ATP to the 4'-position of a tetraacyldisaccharide 1-phosphate intermediate (termed DS-1-P) to form tetraacyldisaccharide 1,4'-bis-phosphate (lipid IVA). The sequence is that of Tetraacyldisaccharide 4'-kinase from Syntrophotalea carbinolica (strain DSM 2380 / NBRC 103641 / GraBd1) (Pelobacter carbinolicus).